The chain runs to 538 residues: Cytochrome P450 52-M1 (538 aa).

The helical transmembrane segment at 18–38 threads the bilayer; that stretch reads GLLPLLFVAFLVLHEPIWLLW. Cysteine 484 is a heme binding site.

This sequence belongs to the cytochrome P450 family. Heme serves as cofactor.

It is found in the membrane. The enzyme catalyses an omega-methyl-long-chain fatty acid + reduced [NADPH--hemoprotein reductase] + O2 = an omega-hydroxy-long-chain fatty acid + oxidized [NADPH--hemoprotein reductase] + H2O + H(+). The catalysed reaction is an (omega-1)-ethyl fatty acid + reduced [NADPH--hemoprotein reductase] + O2 = an (omega-1)-hydroxy-long-chain fatty acid + oxidized [NADPH--hemoprotein reductase] + H2O + H(+). It catalyses the reaction (9Z)-octadecenoate + reduced [NADPH--hemoprotein reductase] + O2 = 18-hydroxy-(9Z)-octadecenoate + oxidized [NADPH--hemoprotein reductase] + H2O + H(+). It carries out the reaction (9Z)-octadecenoate + reduced [NADPH--hemoprotein reductase] + O2 = 17-hydroxy-(9Z)-octadecenoate + oxidized [NADPH--hemoprotein reductase] + H2O + H(+). The enzyme catalyses (9Z,12Z)-octadecadienoate + reduced [NADPH--hemoprotein reductase] + O2 = 18-hydroxy-(9Z,12Z)-octadecadienoate + oxidized [NADPH--hemoprotein reductase] + H2O + H(+). The catalysed reaction is (9Z,12Z)-octadecadienoate + reduced [NADPH--hemoprotein reductase] + O2 = 17-hydroxy-(9Z,12Z)-octadecadienoate + oxidized [NADPH--hemoprotein reductase] + H2O + H(+). It catalyses the reaction hexadecanoate + reduced [NADPH--hemoprotein reductase] + O2 = 16-hydroxyhexadecanoate + oxidized [NADPH--hemoprotein reductase] + H2O + H(+). It carries out the reaction (9Z)-hexadecenoate + reduced [NADPH--hemoprotein reductase] + O2 = (9Z)-16-hydroxyhexadec-9-enoate + oxidized [NADPH--hemoprotein reductase] + H2O + H(+). The enzyme catalyses octadecanoate + reduced [NADPH--hemoprotein reductase] + O2 = 18-hydroxyoctadecanoate + oxidized [NADPH--hemoprotein reductase] + H2O + H(+). In terms of biological role, catalyzes the first step of sophorolipid biosynthesis. Catalyzes the terminal (at the omega-position) or subterminal (at the omega(-1)-position) hydroxylation of a fatty acid. This converts the fatty acid to a substrate for the subsequent glycosyltransferase reactions. Oleic acid is the preferred substrate, but it acts on various other C-16, C-18 and C-20 saturated and unsaturated fatty acids, namely palmitic, palmitoleic, stearic, linoleic, cis-9,10-epoxystearic, trans-9,10-epoxystearic and arachidonic acid. This is Cytochrome P450 52-M1 from Starmerella bombicola (Yeast).